A 411-amino-acid chain; its full sequence is Class E basic helix-loop-helix protein 40 (411 aa).

A disordered region spans residues 1-21 (MERIPSAQPPPTCLPKTPGLE). The segment at 1–139 (MERIPSAQPP…LSGKNIEAGQ (139 aa)) is essential for interaction with BMAL1, E-box binding and repressor activity against the CLOCK-BMAL1 heterodimer. The region spanning 52–107 (TYKLPHRLIEKKRRDRINECIAQLKDLLPEHLKLTTLGHLEKAVVLELTLKHVKAL) is the bHLH domain. Residues 75–79 (LKDLL) are necessary for interaction with RXRA and repressor activity against RXRA. The Orange domain maps to 142–175 (FCSGFQTCAREVLQYLAKHENTRDLKSSQLVTHL). Lys159 is covalently cross-linked (Glycyl lysine isopeptide (Lys-Gly) (interchain with G-Cter in SUMO1, SUMO2 and SUMO3)). A Glycyl lysine isopeptide (Lys-Gly) (interchain with G-Cter in SUMO2) cross-link involves residue Lys167. A disordered region spans residues 186-293 (SASRKPLDSA…EPPTKKSRMQ (108 aa)). Ser235 is modified (phosphoserine). A compositionally biased stretch (basic and acidic residues) spans 248 to 271 (ELEKGDLRSEQPYFKSDHGRRFTV). Lys279 is covalently cross-linked (Glycyl lysine isopeptide (Lys-Gly) (interchain with G-Cter in SUMO1); alternate). Lys279 participates in a covalent cross-link: Glycyl lysine isopeptide (Lys-Gly) (interchain with G-Cter in SUMO1, SUMO2 and SUMO3); alternate. Residue Lys279 forms a Glycyl lysine isopeptide (Lys-Gly) (interchain with G-Cter in SUMO2); alternate linkage. Lys288 participates in a covalent cross-link: Glycyl lysine isopeptide (Lys-Gly) (interchain with G-Cter in SUMO2). Phosphoserine is present on Ser383.

In terms of assembly, homodimer. Heterodimer with BHLHE41/DEC2. Interacts with TCF3/E47. Interacts with ubiquitin-conjugating enzyme UBE2I/UBC9. Interacts with HDAC1, SUMO1, RXRA and BMAL1. Ubiquitinated; which may lead to proteasomal degradation. In terms of processing, sumoylation inhibits its ubiquitination and promotes its negative regulation of the CLOCK-BMAL1 heterodimer transcriptional activator activity. In terms of tissue distribution, expressed in heart, spleen, lung, liver, muscle, kidney, uterus and gut. Highly expressed in the cerebral cortex, especially in the fifth layer, thalamus, superior colliculus, olfactory bulb, piriform cortex, hippocampus and hypothalamic nuclei.

The protein resides in the cytoplasm. It is found in the nucleus. Functionally, transcriptional repressor involved in the regulation of the circadian rhythm by negatively regulating the activity of the clock genes and clock-controlled genes. Acts as the negative limb of a novel autoregulatory feedback loop (DEC loop) which differs from the one formed by the PER and CRY transcriptional repressors (PER/CRY loop). Both these loops are interlocked as it represses the expression of PER1/2 and in turn is repressed by PER1/2 and CRY1/2. Represses the activity of the circadian transcriptional activator: CLOCK-BMAL1|BMAL2 heterodimer by competing for the binding to E-box elements (5'-CACGTG-3') found within the promoters of its target genes. Negatively regulates its own expression and the expression of DBP and BHLHE41/DEC2. Acts as a corepressor of RXR and the RXR-LXR heterodimers and represses the ligand-induced RXRA and NR1H3/LXRA transactivation activity. May be involved in the regulation of chondrocyte differentiation via the cAMP pathway. Represses the transcription of NR0B2 and attentuates the transactivation of NR0B2 by the CLOCK-BMAL1 complex. Drives the circadian rhythm of blood pressure through transcriptional repression of ATP1B1 in the cardiovascular system. This is Class E basic helix-loop-helix protein 40 (Bhlhe40) from Rattus norvegicus (Rat).